We begin with the raw amino-acid sequence, 221 residues long: Holliday junction branch migration complex subunit RuvA (221 aa).

The domain I stretch occupies residues 1-61 (MQIYQFGKIV…DYTKITYGFA (61 aa)). Positions 62-139 (SFRERILFED…RFNENHKNQT (78 aa)) are domain II. The disordered stretch occupies residues 133–155 (ENHKNQTEETNQDSQEKELEKKD). Residues 140–166 (EETNQDSQEKELEKKDDLADITIQKSN) form a flexible linker region. The span at 146–155 (SQEKELEKKD) shows a compositional bias: basic and acidic residues. The segment at 167 to 221 (LEDKTAANLEDTLKMLGFKPRQIDYALTKVEPNENFENLIENAIKIISNAREFRN) is domain III.

The protein belongs to the RuvA family. Homotetramer. Forms an RuvA(8)-RuvB(12)-Holliday junction (HJ) complex. HJ DNA is sandwiched between 2 RuvA tetramers; dsDNA enters through RuvA and exits via RuvB. An RuvB hexamer assembles on each DNA strand where it exits the tetramer. Each RuvB hexamer is contacted by two RuvA subunits (via domain III) on 2 adjacent RuvB subunits; this complex drives branch migration. In the full resolvosome a probable DNA-RuvA(4)-RuvB(12)-RuvC(2) complex forms which resolves the HJ.

It is found in the cytoplasm. Functionally, the RuvA-RuvB-RuvC complex processes Holliday junction (HJ) DNA during genetic recombination and DNA repair, while the RuvA-RuvB complex plays an important role in the rescue of blocked DNA replication forks via replication fork reversal (RFR). RuvA specifically binds to HJ cruciform DNA, conferring on it an open structure. The RuvB hexamer acts as an ATP-dependent pump, pulling dsDNA into and through the RuvAB complex. HJ branch migration allows RuvC to scan DNA until it finds its consensus sequence, where it cleaves and resolves the cruciform DNA. This is Holliday junction branch migration complex subunit RuvA from Mesomycoplasma hyopneumoniae (strain J / ATCC 25934 / NCTC 10110) (Mycoplasma hyopneumoniae).